The sequence spans 101 residues: MHLSTSAAAILALSLAGPTMAGRPYFCPLALDAKFLQVPYCCEGFVPARDSKVSFEGVNCIDVSSDEDFVKTCPKGGTPKCCYSIGPKVICTTEVGDGVDK.

Positions 1 to 21 are cleaved as a signal peptide; sequence MHLSTSAAAILALSLAGPTMA. 4 disulfide bridges follow: Cys-27–Cys-81, Cys-41–Cys-73, Cys-42–Cys-60, and Cys-82–Cys-91.

As to quaternary structure, self-assembles to form functional amyloid fibrils called rodlets. Self-assembly into fibrillar rodlets occurs spontaneously at hydrophobic:hydrophilic interfaces and the rodlets further associate laterally to form amphipathic monolayers.

The protein localises to the secreted. Its subcellular location is the spore wall. Aerial growth, conidiation, and dispersal of filamentous fungi in the environment rely upon a capability of their secreting small amphipathic proteins called hydrophobins (HPBs) with low sequence identity. Class I can self-assemble into an outermost layer of rodlet bundles on aerial cell surfaces, conferring cellular hydrophobicity that supports fungal growth, development and dispersal; whereas Class II form highly ordered films at water-air interfaces through intermolecular interactions but contribute nothing to the rodlet structure. DewD is an unclassified hydrophobin that contributes to the hydrophobicity of the spore surface. This chain is Unclassified hydrophobin dewD, found in Emericella nidulans (strain FGSC A4 / ATCC 38163 / CBS 112.46 / NRRL 194 / M139) (Aspergillus nidulans).